The chain runs to 360 residues: Peptide chain release factor 1 (360 aa).

Gln-235 is subject to N5-methylglutamine. Over residues 284 to 295 (ERQEQAQADTRR) the composition is skewed to basic and acidic residues. The interval 284–309 (ERQEQAQADTRRNLLGSGDRSDKIRT) is disordered.

It belongs to the prokaryotic/mitochondrial release factor family. Methylated by PrmC. Methylation increases the termination efficiency of RF1.

The protein resides in the cytoplasm. Functionally, peptide chain release factor 1 directs the termination of translation in response to the peptide chain termination codons UAG and UAA. The polypeptide is Peptide chain release factor 1 (prfA) (Pasteurella multocida (strain Pm70)).